A 668-amino-acid polypeptide reads, in one-letter code: Probable potassium transport system protein Kup (668 aa).

12 consecutive transmembrane segments (helical) span residues 17 to 37, 59 to 79, 104 to 124, 148 to 168, 175 to 195, 221 to 241, 256 to 276, 299 to 319, 350 to 370, 380 to 400, 403 to 423, and 430 to 450; these read GILVAMGVVYGDIGTSPLYVM, VSLIFWTLTILTTIKYVVIAL, IIPAMIGGAALLADGVLTPAV, TIIVVITLTIILILFSVQRFG, AFGPIMFLWFTFLGIIGLMNF, LGLFILGNIFLATTGAEALYS, PYIKICLILNYLGQAAWLLTV, ILVFGVVFATIAAVIASQALI, MYIPAVNLILWLACSAIVLAF, YGLSITITMLMTTILLLFYLL, IPAWSAYLISLFFAAIEVVFF, and FFHGGYVAVGMAVFLLCIMII.

It belongs to the HAK/KUP transporter (TC 2.A.72) family.

The protein localises to the cell membrane. The enzyme catalyses K(+)(in) + H(+)(in) = K(+)(out) + H(+)(out). Functionally, transport of potassium into the cell. Likely operates as a K(+):H(+) symporter. In Enterococcus faecalis (strain ATCC 700802 / V583), this protein is Probable potassium transport system protein Kup.